Reading from the N-terminus, the 518-residue chain is Membrane-bound lytic murein transglycosylase F (518 aa).

A signal peptide spans 1-21 (MKKLKINYLFIGILALLLAVA). The segment at 22–269 (LWPSIPWFGK…RIEEKYLGHG (248 aa)) is non-LT domain. Positions 270–518 (DDFDYVDTRT…SRKGSEEKQN (249 aa)) are LT domain. The active site involves glutamate 314.

It in the N-terminal section; belongs to the bacterial solute-binding protein 3 family. In the C-terminal section; belongs to the transglycosylase Slt family.

The protein localises to the cell outer membrane. It catalyses the reaction Exolytic cleavage of the (1-&gt;4)-beta-glycosidic linkage between N-acetylmuramic acid (MurNAc) and N-acetylglucosamine (GlcNAc) residues in peptidoglycan, from either the reducing or the non-reducing ends of the peptidoglycan chains, with concomitant formation of a 1,6-anhydrobond in the MurNAc residue.. Its function is as follows. Murein-degrading enzyme that degrades murein glycan strands and insoluble, high-molecular weight murein sacculi, with the concomitant formation of a 1,6-anhydromuramoyl product. Lytic transglycosylases (LTs) play an integral role in the metabolism of the peptidoglycan (PG) sacculus. Their lytic action creates space within the PG sacculus to allow for its expansion as well as for the insertion of various structures such as secretion systems and flagella. The sequence is that of Membrane-bound lytic murein transglycosylase F from Escherichia coli O157:H7.